We begin with the raw amino-acid sequence, 267 residues long: 4-hydroxy-tetrahydrodipicolinate reductase (267 aa).

An NAD(+)-binding site is contributed by Gly10 to Gln15. NADP(+) is bound at residue Arg37. Residues Gly99 to Thr101 and Thr122 to Val125 contribute to the NAD(+) site. The active-site Proton donor/acceptor is the His154. His155 lines the (S)-2,3,4,5-tetrahydrodipicolinate pocket. Lys158 acts as the Proton donor in catalysis. Gly164–Thr165 lines the (S)-2,3,4,5-tetrahydrodipicolinate pocket.

It belongs to the DapB family.

The protein resides in the cytoplasm. The enzyme catalyses (S)-2,3,4,5-tetrahydrodipicolinate + NAD(+) + H2O = (2S,4S)-4-hydroxy-2,3,4,5-tetrahydrodipicolinate + NADH + H(+). It catalyses the reaction (S)-2,3,4,5-tetrahydrodipicolinate + NADP(+) + H2O = (2S,4S)-4-hydroxy-2,3,4,5-tetrahydrodipicolinate + NADPH + H(+). The protein operates within amino-acid biosynthesis; L-lysine biosynthesis via DAP pathway; (S)-tetrahydrodipicolinate from L-aspartate: step 4/4. Functionally, catalyzes the conversion of 4-hydroxy-tetrahydrodipicolinate (HTPA) to tetrahydrodipicolinate. The chain is 4-hydroxy-tetrahydrodipicolinate reductase from Ehrlichia canis (strain Jake).